Consider the following 458-residue polypeptide: UDP-N-acetylmuramoylalanine--D-glutamate ligase (458 aa).

Glycine 124–threonine 130 provides a ligand contact to ATP.

The protein belongs to the MurCDEF family.

It is found in the cytoplasm. The catalysed reaction is UDP-N-acetyl-alpha-D-muramoyl-L-alanine + D-glutamate + ATP = UDP-N-acetyl-alpha-D-muramoyl-L-alanyl-D-glutamate + ADP + phosphate + H(+). Its pathway is cell wall biogenesis; peptidoglycan biosynthesis. Functionally, cell wall formation. Catalyzes the addition of glutamate to the nucleotide precursor UDP-N-acetylmuramoyl-L-alanine (UMA). In Clostridium kluyveri (strain NBRC 12016), this protein is UDP-N-acetylmuramoylalanine--D-glutamate ligase.